The sequence spans 702 residues: Elongation factor G (702 aa).

The region spanning glutamate 8–valine 290 is the tr-type G domain. Residues alanine 17 to threonine 24, aspartate 88 to histidine 92, and asparagine 142 to aspartate 145 contribute to the GTP site.

Belongs to the TRAFAC class translation factor GTPase superfamily. Classic translation factor GTPase family. EF-G/EF-2 subfamily.

It is found in the cytoplasm. Functionally, catalyzes the GTP-dependent ribosomal translocation step during translation elongation. During this step, the ribosome changes from the pre-translocational (PRE) to the post-translocational (POST) state as the newly formed A-site-bound peptidyl-tRNA and P-site-bound deacylated tRNA move to the P and E sites, respectively. Catalyzes the coordinated movement of the two tRNA molecules, the mRNA and conformational changes in the ribosome. The chain is Elongation factor G from Acidovorax sp. (strain JS42).